A 728-amino-acid chain; its full sequence is Prolyl 3-hydroxylase 1 (728 aa).

Residues 1–14 (MVAVAAAAASRATA) form the signal peptide. TPR repeat units lie at residues 25-58 (PDLL…RAAL), 135-168 (RSPY…NPEH), 197-230 (HMHE…YFVA), and 293-326 (PSHY…FPND). N-linked (GlcNAc...) asparagine glycosylation occurs at N308. Positions 393–431 (KRLQEKQKSERETAVRISQEIGNLMKEIETLVEEKTKES) form a coiled coil. Residues N450, N459, and N532 are each glycosylated (N-linked (GlcNAc...) asparagine). The region spanning 556–670 (SHLVCRTAIE…RCAIALWFTL (115 aa)) is the Fe2OG dioxygenase domain. Fe cation contacts are provided by H579, D581, and H651. R661 is an active-site residue. The tract at residues 691–728 (SPEEVDLPQEQPLPDQQGSPKPGEESLSDRESQPKDEL) is disordered. Residues 698 to 707 (PQEQPLPDQQ) show a composition bias toward low complexity. Residues 712–728 (PGEESLSDRESQPKDEL) are compositionally biased toward basic and acidic residues. Positions 725–728 (KDEL) match the Prevents secretion from ER motif.

This sequence belongs to the leprecan family. The cofactor is Fe cation. Requires L-ascorbate as cofactor. In terms of processing, O-glycosylated; chondroitin sulfate. In terms of tissue distribution, expressed in basement membranes of cardiac muscle, skeletal muscle, central nervous system, intestinal tract, trachea, ear, skin, liver and kidney. In kidney, localizes to the glomerular basement membrane, mesangial matrix and Bowman's capsule of the nephron. In the renal parenchyma, expressed in the basement membranes of tubules and blood vessels. In the ear and trachea, localizes to the perimeter of resident chondrocytes in lacunae.

Its subcellular location is the endoplasmic reticulum. The protein localises to the secreted. The protein resides in the extracellular space. It is found in the extracellular matrix. The enzyme catalyses L-prolyl-[collagen] + 2-oxoglutarate + O2 = trans-3-hydroxy-L-prolyl-[collagen] + succinate + CO2. Its function is as follows. Basement membrane-associated chondroitin sulfate proteoglycan (CSPG). Has prolyl 3-hydroxylase activity catalyzing the post-translational formation of 3-hydroxyproline in -Xaa-Pro-Gly- sequences in collagens, especially types IV and V. May be involved in the secretory pathway of cells. Has growth suppressive activity in fibroblasts. The protein is Prolyl 3-hydroxylase 1 of Rattus norvegicus (Rat).